Consider the following 1085-residue polypeptide: Toxin VasX (1085 aa).

The tract at residues 1–20 (MSNPNQAAKTGQTNDAQNPA) is disordered. The next 4 helical transmembrane spans lie at 753–773 (ALGEAIYATGNTIVVAGAISA), 813–833 (IALVATVGMIASALETWESWG), 860–880 (IIFYIQFFTLLGSGIGGPSIA), and 884–904 (AGWMLAGFAVIGIVYLIGVIL).

The protein resides in the secreted. It is found in the host membrane. Functionally, toxin secreted by the type VI (T6SS) secretion system that acts on prokaryotic target cells. Acts in conjunction with VasW, an accessory protein to VasX, to compromise the inner membrane of prokaryotic target cells. This chain is Toxin VasX, found in Vibrio cholerae serotype O1 (strain ATCC 39315 / El Tor Inaba N16961).